A 317-amino-acid polypeptide reads, in one-letter code: Large ribosomal subunit protein uL10 (317 aa).

Residue Tyr-24 is modified to Phosphotyrosine. The residue at position 59 (Thr-59) is a Phosphothreonine. A Glycyl lysine isopeptide (Lys-Gly) (interchain with G-Cter in ubiquitin) cross-link involves residue Lys-264. Residues 294–317 (APAKVEAKEESEESDEDMGFGLFD) form a disordered region. Lys-297 participates in a covalent cross-link: Glycyl lysine isopeptide (Lys-Gly) (interchain with G-Cter in SUMO1); alternate. A Glycyl lysine isopeptide (Lys-Gly) (interchain with G-Cter in SUMO2); alternate cross-link involves residue Lys-297. Over residues 302–311 (EESEESDEDM) the composition is skewed to acidic residues. A phosphoserine mark is found at Ser-304 and Ser-307.

Belongs to the universal ribosomal protein uL10 family. As to quaternary structure, P0 forms a pentameric complex by interaction with dimers of P1 and P2. Identified in a IGF2BP1-dependent mRNP granule complex containing untranslated mRNAs. Interacts with APEX1. Interacts with FMR1 isoform 6. Ubiquitinated at Lys-264 by RNF14 and RNF25 in response to ribosome collisions (ribosome stalling).

The protein resides in the nucleus. The protein localises to the cytoplasm. In terms of biological role, ribosomal protein P0 is the functional equivalent of E.coli protein L10. This is Large ribosomal subunit protein uL10 (RPLP0) from Homo sapiens (Human).